Here is a 320-residue protein sequence, read N- to C-terminus: Ferrochelatase (320 aa).

Fe cation contacts are provided by His-194 and Glu-275.

This sequence belongs to the ferrochelatase family. As to quaternary structure, monomer.

It localises to the cytoplasm. It carries out the reaction heme b + 2 H(+) = protoporphyrin IX + Fe(2+). Its pathway is porphyrin-containing compound metabolism; protoheme biosynthesis; protoheme from protoporphyrin-IX: step 1/1. Catalyzes the ferrous insertion into protoporphyrin IX. This chain is Ferrochelatase, found in Escherichia coli (strain SMS-3-5 / SECEC).